Here is a 162-residue protein sequence, read N- to C-terminus: Serine-protein kinase RsbW (162 aa).

Belongs to the anti-sigma-factor family.

The enzyme catalyses L-seryl-[protein] + ATP = O-phospho-L-seryl-[protein] + ADP + H(+). It catalyses the reaction L-threonyl-[protein] + ATP = O-phospho-L-threonyl-[protein] + ADP + H(+). Negative regulator of sigma-B activity. Phosphorylates and inactivates its specific antagonist protein, RsbV. Upon phosphorylation of RsbV, RsbW is released and binds to sigma-B, thereby blocking its ability to form an RNA polymerase holoenzyme (E-sigma-B). The chain is Serine-protein kinase RsbW from Bacillus pumilus (strain SAFR-032).